Consider the following 353-residue polypeptide: Replication factor C subunit 2 (353 aa).

The residue at position 1 (M1) is an N-acetylmethionine. ATP is bound by residues V28, R32, G65–S73, N171, and R229.

It belongs to the activator 1 small subunits family. As to quaternary structure, replication factor C (RFC) is a heteropentamer of subunits RFC1, RFC2, RFC3, RFC4 and RFC5 and forms a complex with POL30/PCNA in the presence of ATP. Component of the RAD24-RFC complex which consists of RAD14, RFC2, RFC3, RFC4 and RFC5 and associates with the checkpoint clamp DDC1:MEC3:RAD17 complex. Component of the ELG1-RFC complex which consists of ELG1, RFC2, RFC3, RFC4 and RFC5. Component of the CTF18-RFC complex, which consists of CTF18, CTF8, DCC1, RFC2, RFC3, RFC4 and RFC5. RFC2 interacts with ECO1.

Its subcellular location is the nucleus. Its function is as follows. Component of ATP-dependent clamp loader (RFC and RFC-like) complexes for DNA clamps, such as the POL30/PCNA homotrimer and the checkpoint clamp DDC1:MEC3:RAD17 complex. During a clamp loading circle, the RFC:clamp complex binds to DNA and the recognition of the double-stranded/single-stranded junction stimulates ATP hydrolysis by RFC. The complex presumably provides bipartite ATP sites in which one subunit supplies a catalytic site for hydrolysis of ATP bound to the neighboring subunit. Dissociation of RFC from the clamp leaves the clamp encircling DNA. Component of the replication factor C (RFC or activator 1) complex which loads POL30/PCNA and acts during elongation of primed DNA templates by DNA polymerase delta and epsilon. RFC has an essential but redundant activity in sister chromatid cohesion establishment. Component of the RFC-like complex CTF18-RFC which is required for efficient establishment of chromosome cohesion during S-phase and may load or unload POL30/PCNA. Component of the RFC-like RAD24-RFC complex which loads the checkpoint clamp DDC1:MEC3:RAD17 complex and is involved in DNA repair pathways. Component of the RFC-like ELG1-RFC complex which appears to have a role in DNA replication, replication fork re-start, recombination and repair. RFC2 binds ATP and single-stranded DNA. The protein is Replication factor C subunit 2 (RFC2) of Saccharomyces cerevisiae (strain ATCC 204508 / S288c) (Baker's yeast).